A 389-amino-acid polypeptide reads, in one-letter code: tRNA-specific 2-thiouridylase MnmA (389 aa).

ATP contacts are provided by residues 9–16 (GMSGGVDS) and Met35. Residues 95–97 (NPD) form an interaction with target base in tRNA region. The active-site Nucleophile is Cys100. Cys100 and Cys196 are joined by a disulfide. An ATP-binding site is contributed by Gly124. Residues 146-148 (KDQ) form an interaction with tRNA region. The active-site Cysteine persulfide intermediate is the Cys196. Positions 308–309 (RY) are interaction with tRNA.

The protein belongs to the MnmA/TRMU family.

It is found in the cytoplasm. It catalyses the reaction S-sulfanyl-L-cysteinyl-[protein] + uridine(34) in tRNA + AH2 + ATP = 2-thiouridine(34) in tRNA + L-cysteinyl-[protein] + A + AMP + diphosphate + H(+). Functionally, catalyzes the 2-thiolation of uridine at the wobble position (U34) of tRNA, leading to the formation of s(2)U34. In Burkholderia ambifaria (strain MC40-6), this protein is tRNA-specific 2-thiouridylase MnmA.